Consider the following 309-residue polypeptide: Homoserine O-succinyltransferase (309 aa).

Cys142 serves as the catalytic Acyl-thioester intermediate. Substrate contacts are provided by Lys163 and Ser192. Catalysis depends on His235, which acts as the Proton acceptor. Residue Glu237 is part of the active site. Residue Arg249 coordinates substrate.

The protein belongs to the MetA family.

Its subcellular location is the cytoplasm. The enzyme catalyses L-homoserine + succinyl-CoA = O-succinyl-L-homoserine + CoA. The protein operates within amino-acid biosynthesis; L-methionine biosynthesis via de novo pathway; O-succinyl-L-homoserine from L-homoserine: step 1/1. Functionally, transfers a succinyl group from succinyl-CoA to L-homoserine, forming succinyl-L-homoserine. The protein is Homoserine O-succinyltransferase of Yersinia pseudotuberculosis serotype O:1b (strain IP 31758).